Reading from the N-terminus, the 353-residue chain is Nucleotide-binding protein sce5766 (353 aa).

27–34 (GLSGAGKS) provides a ligand contact to ATP. A GTP-binding site is contributed by 76–79 (DVRV). The tract at residues 310 to 353 (SGVPSGVGEGMAGAPGVDLRLAQPGATPSEPRPASDTSVTGGER) is disordered. Positions 344–353 (SDTSVTGGER) are enriched in polar residues.

This sequence belongs to the RapZ-like family.

Displays ATPase and GTPase activities. This Sorangium cellulosum (strain So ce56) (Polyangium cellulosum (strain So ce56)) protein is Nucleotide-binding protein sce5766.